The chain runs to 994 residues: MVVTKLATQRPKLPSVGRLGLVDPPAGERLAQLGWDRHEDQAHVDLLWSLSRAPDADAALRALIRLSENPDTGWDELNAALLRERSLRGRLFSVLGSSLALGDHLVAHPQSWKLLRGKVTLPSHDQLQRSFVECVEESEGMPGSLVHRLRTQYRDYVLMLAALDLAATVEDEPVLPFTVVAARLADAADAALAAALRVAEASVCGEHPPPRLAVIAMGKCGARELNYVSDVDVIFVAERSDPRNARVASEMMRVASAAFFEVDAALRPEGRNGELVRTLESHIAYYQRWAKTWEFQALLKARPVVGDAELGERYLTALMPMVWRACEREDFVVEVQAMRRRVEQLVPADVRGRELKLGSGGLRDVEFAVQLLQLVHARSDESLRVASTVDALAALGEGGYIGREDAANMTASYEFLRLLEHRLQLQRLKRTHLLPDPEDEEAVRWLARAAHIRPDGRNDAAGVLREELKKQNVRVSKLHTKLFYQPLLESIGPTGLEIAHGMTLEAAGRRLAALGYEGPQTALKHMSALVNQSGRRGRVQSVLLPRLLDWMSYAPDPDGGLLAYRRLSEALATESWYLATLRDKPAVAKRLMHVLGTSAYVPDLLMRAPRVIQQYEDGPAGPKLLETEPAAVARALIASASRYPDPERAIAGARTLRRRELARIGSADLLGLLEVSEVCRALTSVWVAVLQAALDVMIRASLPDDDRAPAAIAVIGMGRLGGAELGYGSDADVMFVCEPATGVDDARAVKWSTSIAERVRALLGTPSVDPPLELDANLRPEGRNGPLVRTLGSYAAYYEQWAQPWEIQALLRAHAVAGDAELGQRFLRMVDKTRYPPDGVSADSVREIRRIKARIESERLPRGADPNTHTKLGRGGLADIEWTVQLLQLQHAHQVPALHNTSTLQSLDVIAAADLVPAADVELLRQAWLTATRARNALVLVRGKPTDQLPGPGRQLNAVAVAAGWRNDDGGEFLDNYLRVTRRAKAVVRKVFGS.

Positions Met-1–Leu-487 are adenylyl removase. The segment at Gly-492–Ser-994 is adenylyl transferase.

It belongs to the GlnE family. Mg(2+) is required as a cofactor.

The enzyme catalyses [glutamine synthetase]-O(4)-(5'-adenylyl)-L-tyrosine + phosphate = [glutamine synthetase]-L-tyrosine + ADP. The catalysed reaction is [glutamine synthetase]-L-tyrosine + ATP = [glutamine synthetase]-O(4)-(5'-adenylyl)-L-tyrosine + diphosphate. In terms of biological role, involved in the regulation of glutamine synthetase GlnA, a key enzyme in the process to assimilate ammonia. When cellular nitrogen levels are high, the C-terminal adenylyl transferase (AT) inactivates GlnA by covalent transfer of an adenylyl group from ATP to specific tyrosine residue of GlnA, thus reducing its activity. Conversely, when nitrogen levels are low, the N-terminal adenylyl removase (AR) activates GlnA by removing the adenylyl group by phosphorolysis, increasing its activity. The regulatory region of GlnE binds the signal transduction protein PII (GlnB) which indicates the nitrogen status of the cell. This chain is Bifunctional glutamine synthetase adenylyltransferase/adenylyl-removing enzyme, found in Mycobacterium tuberculosis (strain CDC 1551 / Oshkosh).